The primary structure comprises 145 residues: Putative pre-16S rRNA nuclease (145 aa).

The protein belongs to the YqgF nuclease family.

It localises to the cytoplasm. Could be a nuclease involved in processing of the 5'-end of pre-16S rRNA. The sequence is that of Putative pre-16S rRNA nuclease from Sulfurihydrogenibium sp. (strain YO3AOP1).